A 156-amino-acid chain; its full sequence is Small ribosomal subunit protein uS7c (156 aa).

This sequence belongs to the universal ribosomal protein uS7 family. As to quaternary structure, part of the 30S ribosomal subunit.

Its subcellular location is the plastid. The protein resides in the chloroplast. Functionally, one of the primary rRNA binding proteins, it binds directly to 16S rRNA where it nucleates assembly of the head domain of the 30S subunit. In Porphyra purpurea (Red seaweed), this protein is Small ribosomal subunit protein uS7c (rps7).